A 423-amino-acid chain; its full sequence is UDP-N-acetylglucosamine 1-carboxyvinyltransferase 2 (423 aa).

Residue 23–24 (KN) coordinates phosphoenolpyruvate. Residue R93 coordinates UDP-N-acetyl-alpha-D-glucosamine. C117 serves as the catalytic Proton donor. C117 bears the 2-(S-cysteinyl)pyruvic acid O-phosphothioketal mark. UDP-N-acetyl-alpha-D-glucosamine contacts are provided by residues 122–126 (RPIDQ), D305, and I327.

This sequence belongs to the EPSP synthase family. MurA subfamily.

The protein resides in the cytoplasm. It catalyses the reaction phosphoenolpyruvate + UDP-N-acetyl-alpha-D-glucosamine = UDP-N-acetyl-3-O-(1-carboxyvinyl)-alpha-D-glucosamine + phosphate. The protein operates within cell wall biogenesis; peptidoglycan biosynthesis. Cell wall formation. Adds enolpyruvyl to UDP-N-acetylglucosamine. The polypeptide is UDP-N-acetylglucosamine 1-carboxyvinyltransferase 2 (Listeria monocytogenes serovar 1/2a (strain ATCC BAA-679 / EGD-e)).